Consider the following 361-residue polypeptide: 4-oxalomesaconate tautomerase (361 aa).

It belongs to the PrpF family.

It carries out the reaction (1E)-4-oxobut-1-ene-1,2,4-tricarboxylate = 4-carboxy-2-hydroxy-cis,cis-muconate. Its function is as follows. Catalyzes the tautomerization of the 4-oxalomesaconic acid keto (OMAketo) generated by GalA dioxygenase to 4-oxalomesaconic acid enol (OMAenol). Mediates the second step in gallate degradation pathway. The sequence is that of 4-oxalomesaconate tautomerase (galD) from Pseudomonas putida (strain ATCC 47054 / DSM 6125 / CFBP 8728 / NCIMB 11950 / KT2440).